The following is a 187-amino-acid chain: Putative glutathione-dependent formaldehyde-activating enzyme (187 aa).

The region spanning 20 to 166 is the CENP-V/GFA domain; it reads FPGGKLYCHC…FESVGLKTYD (147 aa). Zn(2+) is bound by residues cysteine 27, cysteine 29, cysteine 48, cysteine 50, cysteine 53, cysteine 95, and cysteine 98.

It belongs to the Gfa family. It depends on Zn(2+) as a cofactor.

It carries out the reaction S-(hydroxymethyl)glutathione = glutathione + formaldehyde. The protein operates within one-carbon metabolism; formaldehyde degradation; formate from formaldehyde (glutathione route): step 1/3. Catalyzes the condensation of formaldehyde and glutathione to S-hydroxymethylglutathione. This chain is Putative glutathione-dependent formaldehyde-activating enzyme, found in Talaromyces marneffei (strain ATCC 18224 / CBS 334.59 / QM 7333) (Penicillium marneffei).